The chain runs to 315 residues: Ester hydrolase C11orf54 homolog (315 aa).

Residues histidine 266, histidine 268, and histidine 278 each contribute to the Zn(2+) site.

Monomer.

It is found in the nucleus. Exhibits ester hydrolase activity on the substrate p-nitrophenyl acetate. The chain is Ester hydrolase C11orf54 homolog from Bos taurus (Bovine).